A 373-amino-acid polypeptide reads, in one-letter code: Dynein regulatory complex protein 9 (373 aa).

The stretch at 145 to 200 (EQAMKETIEREKNTTAAVRQLRNDLREEKLDHEEKMKEKKKGLSTLKEQLKALKMD) forms a coiled coil. The IQ domain maps to 336 to 365 (RAQAAVIIQAWWRGHKVRMVMSGGGKKGAK).

This sequence belongs to the DRC9 family. As to quaternary structure, component of the nexin-dynein regulatory complex (N-DRC).

The protein resides in the cytoplasm. Its subcellular location is the cytoskeleton. It localises to the flagellum axoneme. Component of the nexin-dynein regulatory complex (N-DRC), a key regulator of ciliary/flagellar motility which maintains the alignment and integrity of the distal axoneme and regulates microtubule sliding in motile axonemes. This Chlamydomonas reinhardtii (Chlamydomonas smithii) protein is Dynein regulatory complex protein 9.